The sequence spans 793 residues: Coiled-coil domain-containing protein 175 (793 aa).

Coiled-coil stretches lie at residues 131-163 (EINT…NEAL), 205-377 (KRED…VLSE), 431-535 (KTVY…MLMK), 562-679 (LPQL…KYRE), and 716-745 (LVDN…QHVS).

The protein is Coiled-coil domain-containing protein 175 (CCDC175) of Homo sapiens (Human).